A 369-amino-acid chain; its full sequence is 4-hydroxy-3-methylbut-2-en-1-yl diphosphate synthase (flavodoxin) (369 aa).

C270, C273, C305, and E312 together coordinate [4Fe-4S] cluster.

Belongs to the IspG family. The cofactor is [4Fe-4S] cluster.

It catalyses the reaction (2E)-4-hydroxy-3-methylbut-2-enyl diphosphate + oxidized [flavodoxin] + H2O + 2 H(+) = 2-C-methyl-D-erythritol 2,4-cyclic diphosphate + reduced [flavodoxin]. The protein operates within isoprenoid biosynthesis; isopentenyl diphosphate biosynthesis via DXP pathway; isopentenyl diphosphate from 1-deoxy-D-xylulose 5-phosphate: step 5/6. Its function is as follows. Converts 2C-methyl-D-erythritol 2,4-cyclodiphosphate (ME-2,4cPP) into 1-hydroxy-2-methyl-2-(E)-butenyl 4-diphosphate. The sequence is that of 4-hydroxy-3-methylbut-2-en-1-yl diphosphate synthase (flavodoxin) from Pseudomonas fluorescens (strain Pf0-1).